The sequence spans 458 residues: Cysteine--tRNA ligase (458 aa).

Residue Cys-29 coordinates Zn(2+). The 'HIGH' region motif lies at 31–41 (PTVYDFLHIGN). Residues Cys-211, His-236, and Glu-240 each contribute to the Zn(2+) site. Positions 269–273 (KMSKS) match the 'KMSKS' region motif. Lys-272 lines the ATP pocket.

The protein belongs to the class-I aminoacyl-tRNA synthetase family. Monomer. Requires Zn(2+) as cofactor.

Its subcellular location is the cytoplasm. It catalyses the reaction tRNA(Cys) + L-cysteine + ATP = L-cysteinyl-tRNA(Cys) + AMP + diphosphate. The sequence is that of Cysteine--tRNA ligase from Beijerinckia indica subsp. indica (strain ATCC 9039 / DSM 1715 / NCIMB 8712).